A 196-amino-acid chain; its full sequence is Imidazoleglycerol-phosphate dehydratase (196 aa).

This sequence belongs to the imidazoleglycerol-phosphate dehydratase family.

The protein resides in the cytoplasm. It carries out the reaction D-erythro-1-(imidazol-4-yl)glycerol 3-phosphate = 3-(imidazol-4-yl)-2-oxopropyl phosphate + H2O. Its pathway is amino-acid biosynthesis; L-histidine biosynthesis; L-histidine from 5-phospho-alpha-D-ribose 1-diphosphate: step 6/9. This chain is Imidazoleglycerol-phosphate dehydratase, found in Clostridium novyi (strain NT).